A 178-amino-acid chain; its full sequence is Inner membrane-spanning protein YciB (178 aa).

A run of 5 helical transmembrane segments spans residues 22 to 42 (IFWA…YSWY), 50 to 70 (MTLV…YFHN), 76 to 96 (WKVT…QWVM), 121 to 141 (IAWA…AFWL), and 149 to 169 (FKVF…GVYI).

The protein belongs to the YciB family.

The protein localises to the cell inner membrane. Its function is as follows. Plays a role in cell envelope biogenesis, maintenance of cell envelope integrity and membrane homeostasis. The sequence is that of Inner membrane-spanning protein YciB from Cronobacter sakazakii (strain ATCC BAA-894) (Enterobacter sakazakii).